A 663-amino-acid polypeptide reads, in one-letter code: Methionine--tRNA ligase (663 aa).

Residues 10–20 (AYTNGPLHLGH) carry the 'HIGH' region motif. Positions 142, 145, 154, and 157 each coordinate Zn(2+). Residues 323–327 (KMSTS) carry the 'KMSKS' region motif. An ATP-binding site is contributed by Thr326. The tRNA-binding domain occupies 563–663 (YFTKVDLRVG…REISLGSKIH (101 aa)).

It belongs to the class-I aminoacyl-tRNA synthetase family. MetG type 1 subfamily. Homodimer. Requires Zn(2+) as cofactor.

It is found in the cytoplasm. The enzyme catalyses tRNA(Met) + L-methionine + ATP = L-methionyl-tRNA(Met) + AMP + diphosphate. Its function is as follows. Is required not only for elongation of protein synthesis but also for the initiation of all mRNA translation through initiator tRNA(fMet) aminoacylation. The chain is Methionine--tRNA ligase from Methanococcus vannielii (strain ATCC 35089 / DSM 1224 / JCM 13029 / OCM 148 / SB).